A 354-amino-acid polypeptide reads, in one-letter code: UDP-3-O-acylglucosamine N-acyltransferase (354 aa).

The active-site Proton acceptor is His245.

Belongs to the transferase hexapeptide repeat family. LpxD subfamily. As to quaternary structure, homotrimer.

It carries out the reaction a UDP-3-O-[(3R)-3-hydroxyacyl]-alpha-D-glucosamine + a (3R)-hydroxyacyl-[ACP] = a UDP-2-N,3-O-bis[(3R)-3-hydroxyacyl]-alpha-D-glucosamine + holo-[ACP] + H(+). It participates in bacterial outer membrane biogenesis; LPS lipid A biosynthesis. In terms of biological role, catalyzes the N-acylation of UDP-3-O-acylglucosamine using 3-hydroxyacyl-ACP as the acyl donor. Is involved in the biosynthesis of lipid A, a phosphorylated glycolipid that anchors the lipopolysaccharide to the outer membrane of the cell. The polypeptide is UDP-3-O-acylglucosamine N-acyltransferase (Anaeromyxobacter dehalogenans (strain 2CP-1 / ATCC BAA-258)).